The sequence spans 235 residues: uncharacterized protein (235 aa).

The next 2 membrane-spanning stretches (helical) occupy residues 167 to 187 (AFKL…LNEL) and 190 to 210 (LFAY…LLLW).

It localises to the membrane. This is an uncharacterized protein from Saccharomyces cerevisiae (strain ATCC 204508 / S288c) (Baker's yeast).